The chain runs to 81 residues: Metallocarboxypeptidase inhibitor (81 aa).

Positions 1-15 (MFLLVFLCCLHLVIS) are cleaved as a signal peptide. Cystine bridges form between C25-C48, C32-C76, C33-C57, and C36-C72.

Functionally, tightly binding, competitive inhibitor of different types of pancreatic-like carboxypeptidases. Inhibits human CPA4. This is Metallocarboxypeptidase inhibitor from Hirudo medicinalis (Medicinal leech).